A 292-amino-acid chain; its full sequence is RNA 5'-monophosphate methyltransferase (292 aa).

Residues 1–22 (MAASTEQATGGVEKTAAEEKPR) are disordered. Residues Arg-46, Asn-76, Asp-110, 135 to 136 (DF), and Met-164 each bind S-adenosyl-L-methionine. The Bin3-type SAM domain occupies 53–274 (ELLRRLFPQS…KQATETHPIP (222 aa)).

Belongs to the methyltransferase superfamily. In terms of assembly, interacts with DICER1; the interaction may be mediated by RNA.

It is found in the cytoplasm. The catalysed reaction is a 5'-end 5'-phospho-ribonucleoside-RNA + S-adenosyl-L-methionine = a 5'-end (5'-methylphospho)-ribonucleoside-RNA + S-adenosyl-L-homocysteine. It catalyses the reaction a 5'-end 5'-phospho-ribonucleoside-RNA + 2 S-adenosyl-L-methionine = a 5'-end (5'-bismethylphospho)-ribonucleoside-RNA + 2 S-adenosyl-L-homocysteine. Functionally, O-methyltransferase that specifically monomethylates 5'-monophosphate of cytoplasmic histidyl tRNA (tRNA(His)), acting as a capping enzyme by protecting tRNA(His) from cleavage by DICER1. Also able, with less efficiently, to methylate the 5' monophosphate of a subset of pre-miRNAs, acting as a negative regulator of miRNA processing. The 5' monophosphate of pre-miRNAs is recognized by DICER1 and is required for pre-miRNAs processing: methylation at this position reduces the processing of pre-miRNAs by DICER1. Was also reported to mediate dimethylation of pre-miR-145; however dimethylation cannot be reproduced by another group which observes a monomethylation of pre-miR-145. This Bos taurus (Bovine) protein is RNA 5'-monophosphate methyltransferase (BCDIN3D).